The following is a 549-amino-acid chain: Cytochrome bc1 complex cytochrome b subunit (549 aa).

A helical transmembrane segment spans residues 54–74; it reads VCLYSFIIIILTGVYLTLFFH. 2 residues coordinate heme: His-118 and His-132. 3 helical membrane-spanning segments follow: residues 122-142, 150-170, and 182-202; these read ALIF…TGAF, WLFG…GYSL, and FMEG…FFLF. 2 residues coordinate heme: His-219 and His-234. 5 helical membrane passes run 220 to 240, 269 to 289, 334 to 354, 389 to 409, and 417 to 437; these read ILLL…LVFY, AGGF…IATI, LVLG…AIAV, FGVA…NDLW, and INAI…VAFI.

This sequence belongs to the cytochrome b family. The cytochrome bc1 complex is composed of a cytochrome b (QcrB), the Rieske iron-sulfur protein (QcrA) and a diheme cytochrome c (QcrC) subunit. The cofactor is heme.

Its subcellular location is the cell membrane. The catalysed reaction is a quinol + 2 Fe(III)-[cytochrome c](out) = a quinone + 2 Fe(II)-[cytochrome c](out) + 2 H(+)(out). Its function is as follows. Cytochrome b subunit of the cytochrome bc1 complex, an essential component of the respiratory electron transport chain required for ATP synthesis. The bc1 complex catalyzes the oxidation of ubiquinol and the reduction of cytochrome c in the respiratory chain. The bc1 complex operates through a Q-cycle mechanism that couples electron transfer to generation of the proton gradient that drives ATP synthesis. The cytochrome b subunit contains two ubiquinol reactive sites: the oxidation (QP) site and the reduction (QN) site. This chain is Cytochrome bc1 complex cytochrome b subunit (qcrB), found in Streptomyces lividans.